The primary structure comprises 98 residues: Large ribosomal subunit protein uL23 (98 aa).

Belongs to the universal ribosomal protein uL23 family. Part of the 50S ribosomal subunit. Contacts protein L29, and trigger factor when it is bound to the ribosome.

One of the early assembly proteins it binds 23S rRNA. One of the proteins that surrounds the polypeptide exit tunnel on the outside of the ribosome. Forms the main docking site for trigger factor binding to the ribosome. The chain is Large ribosomal subunit protein uL23 from Saccharophagus degradans (strain 2-40 / ATCC 43961 / DSM 17024).